The following is a 364-amino-acid chain: Autophagy-related protein 5 (364 aa).

Positions 1-13 (MASPNPYSYSPQL) are enriched in polar residues. Residues 1–103 (MASPNPYSYS…SLPPKPKPSS (103 aa)) form a disordered region. The segment covering 28 to 42 (SSPSFRSTPFRSSRG) has biased composition (low complexity). Residues 43–53 (TGAGTGIGLGL) are compositionally biased toward gly residues. Residues 72–82 (RSGDGSHDDLP) show a composition bias toward basic and acidic residues. A Glycyl lysine isopeptide (Lys-Gly) (interchain with G-Cter in ATG12) cross-link involves residue lysine 202. Residues 262–306 (PSSPSPPSSDQQQPQRPGGSSSSGSYRVMQTLVPPRGPNNRTPQT) are disordered. Over residues 269–286 (SSDQQQPQRPGGSSSSGS) the composition is skewed to low complexity.

It belongs to the ATG5 family. As to quaternary structure, conjugated with atg12. Conjugated to atg12; which is essential for autophagy.

Its subcellular location is the preautophagosomal structure membrane. Involved in cytoplasm to vacuole transport (Cvt) and autophagic vesicle formation. Autophagy is essential for maintenance of amino acid levels and protein synthesis under nitrogen starvation. Required for selective autophagic degradation of the nucleus (nucleophagy). Also required for mitophagy, which eliminates defective or superfluous mitochondria in order to fulfill cellular energy requirements and prevent excess ROS production. Conjugation with atg12, through a ubiquitin-like conjugating system involving apg-5/atg7 as an E1-like activating enzyme and atg10 as an E2-like conjugating enzyme, is essential for its function. The atg12-apg-4/atg5 conjugate acts as an E3-like enzyme which is required for lipidation of apg-6/atg8 and apg-6/atg8 association to the vesicle membranes. The protein is Autophagy-related protein 5 (apg-4) of Neurospora crassa (strain ATCC 24698 / 74-OR23-1A / CBS 708.71 / DSM 1257 / FGSC 987).